The primary structure comprises 568 residues: PTS system lactose-specific EIICB component (568 aa).

Positions 8–409 (IEKGKPFFEK…LVDTVIYYPF (402 aa)) constitute a PTS EIIC type-3 domain. The next 10 helical transmembrane spans lie at 30-50 (GFIS…IAYV), 65-85 (MLMT…AGTT), 103-123 (INFI…AADP), 128-148 (GFLS…AAFI), 183-203 (FAFS…VIGV), 222-242 (GYLG…VGIH), 246-266 (IVEP…AHLI), 283-303 (FIVT…FMWL), 339-359 (VFFI…KFFV), and 381-401 (IVLG…LILV). The PTS EIIB type-3 domain maps to 465–568 (ETNVLVLCAG…LAFVEEQFKD (104 aa)). Cys-472 (phosphocysteine intermediate; for EIIB activity) is an active-site residue. A Phosphocysteine; by EIIA modification is found at Cys-472.

Its subcellular location is the cell membrane. It carries out the reaction lactose(out) + N(pros)-phospho-L-histidyl-[protein] = lactose 6-phosphate(in) + L-histidyl-[protein]. The phosphoenolpyruvate-dependent sugar phosphotransferase system (sugar PTS), a major carbohydrate active transport system, catalyzes the phosphorylation of incoming sugar substrates concomitantly with their translocation across the cell membrane. The enzyme II LacEF PTS system is involved in lactose transport. This Streptococcus mutans serotype c (strain ATCC 700610 / UA159) protein is PTS system lactose-specific EIICB component.